The sequence spans 233 residues: uncharacterized protein (233 aa).

The protein belongs to the LutC/YkgG family.

This is an uncharacterized protein from Neisseria meningitidis serogroup B (strain ATCC BAA-335 / MC58).